The sequence spans 219 residues: Germin-like protein subfamily 2 member 2 (219 aa).

The signal sequence occupies residues 1–22 (MMNSRISIIIALSCIMITSIRA). An intrachain disulfide couples Cys-32 to Cys-47. Residues Asn-52 and Asn-70 are each glycosylated (N-linked (GlcNAc...) asparagine). Positions 59–209 (FFAGISKPAV…TFQVGSKMVD (151 aa)) constitute a Cupin type-1 domain. Residues His-109, His-111, Glu-116, and His-155 each coordinate Mn(2+).

The protein belongs to the germin family. As to quaternary structure, oligomer (believed to be a pentamer but probably hexamer).

It localises to the secreted. The protein localises to the extracellular space. The protein resides in the apoplast. In terms of biological role, may play a role in plant defense. Probably has no oxalate oxidase activity even if the active site is conserved. The chain is Germin-like protein subfamily 2 member 2 from Arabidopsis thaliana (Mouse-ear cress).